A 416-amino-acid chain; its full sequence is Thyroid hormone receptor alpha-A (416 aa).

The segment covering 1–13 (MEPMSNKQDSNSS) has biased composition (polar residues). The segment at 1-37 (MEPMSNKQDSNSSEGDEKGWPDVPKRKRKNSQCSMKS) is disordered. Residues 1-58 (MEPMSNKQDSNSSEGDEKGWPDVPKRKRKNSQCSMKSMSALSVSVPGYIPSYLEKDEP) form a modulating region. Basic and acidic residues predominate over residues 15 to 24 (GDEKGWPDVP). 2 consecutive NR C4-type zinc fingers follow at residues 59 to 79 (CVVC…CEGC) and 97 to 121 (CKYE…FKKC). The segment at residues 59-126 (CVVCGDKATG…RFKKCISVGM (68 aa)) is a DNA-binding region (nuclear receptor). The region spanning 169–413 (AEWELIRMAT…PPLFLEVFED (245 aa)) is the NR LBD domain.

Belongs to the nuclear hormone receptor family. NR1 subfamily.

The protein resides in the nucleus. High affinity receptor for triiodothyronine. This chain is Thyroid hormone receptor alpha-A (thra1), found in Paralichthys olivaceus (Bastard halibut).